Consider the following 117-residue polypeptide: Membrane-anchored ubiquitin-fold protein 1 (117 aa).

A Ubiquitin-like domain is found at 8–74 (LEIKFRLTDG…LENSKTVKDY (67 aa)). Residue cysteine 112 is the site of S-palmitoyl cysteine attachment. Cysteine methyl ester is present on cysteine 114. Residue cysteine 114 is the site of S-farnesyl cysteine attachment. Residues 115 to 117 (SVM) constitute a propeptide, removed in mature form.

It is found in the cell membrane. In terms of biological role, may serve as docking site to facilitate the association of other proteins to the plasma membrane. This Arabidopsis thaliana (Mouse-ear cress) protein is Membrane-anchored ubiquitin-fold protein 1 (MUB1).